A 910-amino-acid polypeptide reads, in one-letter code: Eukaryotic translation initiation factor 3 subunit C (910 aa).

Residues 1–21 form a disordered region; it reads MSRFFANGSESESESSEEEIQ. A compositionally biased stretch (acidic residues) spans 11–20; the sequence is SESESSEEEI. Phosphoserine occurs at positions 34, 165, 176, and 185. The interval 157-281 is disordered; the sequence is FREAPDQESE…KRAEDDEDGE (125 aa). Acidic residues predominate over residues 162-186; the sequence is DQESEAEDEVVALESDGGDAGDDSD. Low complexity predominate over residues 193 to 207; sequence EAAPKAVKSAPAKAA. Acidic residues predominate over residues 209 to 235; it reads ADDDDSDDSIDWDSDSESETESSDDEN. Over residues 240-268 the composition is skewed to basic and acidic residues; it reads MRERFLKRTTEKEEKDDDKRKDKRKEQKT. A PCI domain is found at 639-815; that stretch reads FHMHINLELL…ETVGMHRSEP (177 aa). Positions 847–910 are disordered; sequence FFQRGNMGNR…QQQVQTIDEE (64 aa). Residues 862–874 show a composition bias toward low complexity; it reads NRNQNNQGGNWLG. Over residues 882–891 the composition is skewed to basic residues; the sequence is RNRNQRGHHK. A compositionally biased stretch (low complexity) spans 895 to 910; it reads DRQQQQQQQVQTIDEE.

This sequence belongs to the eIF-3 subunit C family. As to quaternary structure, component of the eukaryotic translation initiation factor 3 (eIF-3) complex. The eIF-3 complex interacts with pix.

Its subcellular location is the cytoplasm. In terms of biological role, component of the eukaryotic translation initiation factor 3 (eIF-3) complex, which is involved in protein synthesis of a specialized repertoire of mRNAs and, together with other initiation factors, stimulates binding of mRNA and methionyl-tRNAi to the 40S ribosome. The eIF-3 complex specifically targets and initiates translation of a subset of mRNAs involved in cell proliferation. The chain is Eukaryotic translation initiation factor 3 subunit C from Drosophila sechellia (Fruit fly).